Reading from the N-terminus, the 200-residue chain is GTP-binding protein ypt2 (200 aa).

16–23 (GDSGVGKS) provides a ligand contact to GTP. The Effector region motif lies at 38-46 (FITTIGIDF). GTP contacts are provided by residues 64 to 68 (DTAGQ) and 122 to 125 (NKCD). 2 S-geranylgeranyl cysteine lipidation sites follow: Cys199 and Cys200.

It belongs to the small GTPase superfamily. Rab family.

Its subcellular location is the cell membrane. Its function is as follows. Protein transport. Probably involved in vesicular traffic. This is GTP-binding protein ypt2 (ypt2) from Schizosaccharomyces pombe (strain 972 / ATCC 24843) (Fission yeast).